The following is a 594-amino-acid chain: Isocitrate dehydrogenase kinase/phosphatase (594 aa).

ATP contacts are provided by residues 315-321 (APGIRGM) and lysine 336. Aspartate 371 is a catalytic residue.

The protein belongs to the AceK family.

It is found in the cytoplasm. The catalysed reaction is L-seryl-[isocitrate dehydrogenase] + ATP = O-phospho-L-seryl-[isocitrate dehydrogenase] + ADP + H(+). Bifunctional enzyme which can phosphorylate or dephosphorylate isocitrate dehydrogenase (IDH) on a specific serine residue. This is a regulatory mechanism which enables bacteria to bypass the Krebs cycle via the glyoxylate shunt in response to the source of carbon. When bacteria are grown on glucose, IDH is fully active and unphosphorylated, but when grown on acetate or ethanol, the activity of IDH declines drastically concomitant with its phosphorylation. The sequence is that of Isocitrate dehydrogenase kinase/phosphatase from Klebsiella pneumoniae subsp. pneumoniae (strain ATCC 700721 / MGH 78578).